The sequence spans 518 residues: 3-octaprenyl-4-hydroxybenzoate carboxy-lyase (518 aa).

N177 contributes to the Mn(2+) binding site. Prenylated FMN-binding positions include 180–182 (IYR), 194–196 (RWL), and 199–200 (RG). E243 is a Mn(2+) binding site. D318 (proton donor) is an active-site residue.

The protein belongs to the UbiD family. In terms of assembly, homohexamer. The cofactor is prenylated FMN. Requires Mn(2+) as cofactor.

Its subcellular location is the cell membrane. The catalysed reaction is a 4-hydroxy-3-(all-trans-polyprenyl)benzoate + H(+) = a 2-(all-trans-polyprenyl)phenol + CO2. Its pathway is cofactor biosynthesis; ubiquinone biosynthesis. In terms of biological role, catalyzes the decarboxylation of 3-octaprenyl-4-hydroxy benzoate to 2-octaprenylphenol, an intermediate step in ubiquinone biosynthesis. The polypeptide is 3-octaprenyl-4-hydroxybenzoate carboxy-lyase (Burkholderia orbicola (strain AU 1054)).